The sequence spans 306 residues: Ciliary microtubule inner protein 2B (306 aa).

Residues Gln61–Leu92 are disordered.

Belongs to the CIMIP2 family. Expressed in airway epithelial cells.

It is found in the cytoplasm. Its subcellular location is the cytoskeleton. The protein localises to the cilium axoneme. In terms of biological role, microtubule inner protein (MIP) part of the dynein-decorated doublet microtubules (DMTs) in cilia axoneme, which is required for motile cilia beating. This chain is Ciliary microtubule inner protein 2B (cimip2b), found in Xenopus tropicalis (Western clawed frog).